The primary structure comprises 282 residues: Tyrosine recombinase XerA (282 aa).

One can recognise a Core-binding (CB) domain in the interval 2 to 79; it reads EAINEVIEEY…ALRSYFRFEG (78 aa). Positions 95–271 constitute a Tyr recombinase domain; that stretch reads SLPKSLTREE…TVEHLRKAQE (177 aa). Catalysis depends on residues arginine 132, lysine 157, histidine 223, arginine 226, and histidine 249. Residue tyrosine 258 is the O-(3'-phospho-DNA)-tyrosine intermediate of the active site.

This sequence belongs to the 'phage' integrase family. XerA subfamily.

The protein localises to the cytoplasm. Site-specific tyrosine recombinase, which acts by catalyzing the cutting and rejoining of the recombining DNA molecules. In Thermococcus onnurineus (strain NA1), this protein is Tyrosine recombinase XerA.